The chain runs to 191 residues: Large ribosomal subunit protein bL9 (191 aa).

The interval 150–191 (EAERQAKGESLTSADAIYGVDEDALRPEDFFDPDADRDGDDE) is disordered. Residues 179-191 (FFDPDADRDGDDE) are compositionally biased toward acidic residues.

It belongs to the bacterial ribosomal protein bL9 family.

Functionally, binds to the 23S rRNA. This chain is Large ribosomal subunit protein bL9, found in Allorhizobium ampelinum (strain ATCC BAA-846 / DSM 112012 / S4) (Agrobacterium vitis (strain S4)).